The following is a 94-amino-acid chain: Acylphosphatase (94 aa).

The region spanning 7 to 94 (RLTARITGVV…GEFDDFRIID (88 aa)) is the Acylphosphatase-like domain. Residues R22 and N40 contribute to the active site.

The protein belongs to the acylphosphatase family.

It catalyses the reaction an acyl phosphate + H2O = a carboxylate + phosphate + H(+). This Paenarthrobacter aurescens (strain TC1) protein is Acylphosphatase (acyP).